The primary structure comprises 258 residues: Imidazole glycerol phosphate synthase subunit HisF (258 aa).

Residues Asp-11 and Asp-130 contribute to the active site.

Belongs to the HisA/HisF family. Heterodimer of HisH and HisF.

Its subcellular location is the cytoplasm. It carries out the reaction 5-[(5-phospho-1-deoxy-D-ribulos-1-ylimino)methylamino]-1-(5-phospho-beta-D-ribosyl)imidazole-4-carboxamide + L-glutamine = D-erythro-1-(imidazol-4-yl)glycerol 3-phosphate + 5-amino-1-(5-phospho-beta-D-ribosyl)imidazole-4-carboxamide + L-glutamate + H(+). The protein operates within amino-acid biosynthesis; L-histidine biosynthesis; L-histidine from 5-phospho-alpha-D-ribose 1-diphosphate: step 5/9. IGPS catalyzes the conversion of PRFAR and glutamine to IGP, AICAR and glutamate. The HisF subunit catalyzes the cyclization activity that produces IGP and AICAR from PRFAR using the ammonia provided by the HisH subunit. The protein is Imidazole glycerol phosphate synthase subunit HisF of Blochmanniella pennsylvanica (strain BPEN).